The sequence spans 300 residues: Ribonuclease HIII (300 aa).

One can recognise an RNase H type-2 domain in the interval 86–300; sequence RSRIGVDESG…FNEVLGSGNQ (215 aa). 3 residues coordinate a divalent metal cation: D92, E93, and D196.

It belongs to the RNase HII family. RnhC subfamily. Mn(2+) serves as cofactor. Mg(2+) is required as a cofactor.

It localises to the cytoplasm. It catalyses the reaction Endonucleolytic cleavage to 5'-phosphomonoester.. Functionally, endonuclease that specifically degrades the RNA of RNA-DNA hybrids. The protein is Ribonuclease HIII of Chlamydia trachomatis serovar A (strain ATCC VR-571B / DSM 19440 / HAR-13).